A 383-amino-acid polypeptide reads, in one-letter code: Micronemal protein 3 (383 aa).

Residues 1–26 (MRGGTSALLHALTFSGAVWMCTPAEA) form the signal peptide. A propeptide spans 27 to 66 (LPIQKSVQLGSFDKVVPSREVVSESLAPSFAVTETHSSVQ) (required for proper sorting to micronemes). The segment at 67-145 (SPSKQETQLC…HPDKSYGGDC (79 aa)) is lectin-like; required for the binding of host cells. Required for proper sorting to micronemes stretches follow at residues 146–189 (SCEK…SEDP), 190–236 (CSKR…KRTG), and 237–290 (CHAF…LAEK). Residues 186–227 (SEDPCSKRGNAKCGPNGTCIVVDSVSYTCTCGDGETLVNLPE) form the EGF-like domain. Intrachain disulfides connect cysteine 190/cysteine 204 and cysteine 198/cysteine 214. N-linked (GlcNAc...) asparagine glycosylation is present at asparagine 201. An involved in dimerization region spans residues 294-359 (EFGISASSCK…HTVTCEKIKH (66 aa)).

In terms of assembly, homodimer; dimerization is likely required for host cell binding but not for trafficking to micronemes. Post-translationally, removal of the propeptide occurs in a post-medial-Golgi compartment. Removal of the propeptide is required for the host cell binding. The presence of propeptide does not affect dimerization. The presence of propeptide does not affect sorting to micronemes.

It localises to the cytoplasmic vesicle. The protein localises to the secretory vesicle. It is found in the microneme. Its subcellular location is the secreted. The protein resides in the golgi apparatus. It localises to the endoplasmic reticulum. Functionally, adhesin; can bind both the host cells and the parasites. May be involved in parasite invasion by acting as a bridge between the parasite and the host cell. Triggers innate immune responses in mouse macrophages via the TLR11/MyD88/NF-kappa-B pathway. Induces TNF/TNF-alpha secretion in mouse macrophages. Induces secretion of IL6 in mouse and human macrophages likely via different mechanisms. Up-regulates expression of NOS2/iNOS in mouse macrophages. Induces mouse macrophage polarization. The chain is Micronemal protein 3 from Toxoplasma gondii.